We begin with the raw amino-acid sequence, 845 residues long: Ribosome-releasing factor 2, mitochondrial (845 aa).

Residues 1–28 constitute a mitochondrion transit peptide; sequence MIIATSLRSQTFCTWRAWRAVHSTAVRL. In terms of domain architecture, tr-type G spans 38-330; the sequence is DRTRNIGIIA…GVVKYLPSPL (293 aa). GTP is bound by residues 47 to 54, 111 to 115, and 165 to 168; these read AHIDAGKT, DTPGH, and NKMD.

Belongs to the TRAFAC class translation factor GTPase superfamily. Classic translation factor GTPase family. EF-G/EF-2 subfamily.

The protein resides in the mitochondrion. Mitochondrial GTPase that mediates the disassembly of ribosomes from messenger RNA at the termination of mitochondrial protein biosynthesis. Not involved in the GTP-dependent ribosomal translocation step during translation elongation. The chain is Ribosome-releasing factor 2, mitochondrial from Scheffersomyces stipitis (strain ATCC 58785 / CBS 6054 / NBRC 10063 / NRRL Y-11545) (Yeast).